We begin with the raw amino-acid sequence, 394 residues long: Autophagy-related protein 18 (394 aa).

Residues 4 to 42 form a WD 1 repeat; that stretch reads LSNTKLNYVTFNQDHSCLAVATSRGFRIYHTDPFSKIFN. The segment at 146 to 165 is disordered; the sequence is MPKPREDQGERRPAHAPPLS. Positions 148 to 158 are enriched in basic and acidic residues; the sequence is KPREDQGERRP. 2 WD repeats span residues 191 to 231 and 236 to 275; these read AHKM…KLFE and TIPS…NANA. A L/FRRG motif motif is present at residues 232-236; the sequence is FRRGT. The segment at 274–342 is disordered; that stretch reads NAGGAGPAAL…QSGTFGSMLR (69 aa). Low complexity predominate over residues 302 to 312; it reads GSEYSPSGDSD. Positions 331–342 are enriched in polar residues; it reads RRQSGTFGSMLR.

Belongs to the WD repeat PROPPIN family. As to quaternary structure, component of the PI(3,5)P2 regulatory complex.

The protein localises to the preautophagosomal structure membrane. It is found in the vacuole membrane. The protein resides in the endosome membrane. Functionally, the PI(3,5)P2 regulatory complex regulates both the synthesis and turnover of phosphatidylinositol 3,5-bisphosphate (PtdIns(3,5)P2). Necessary for proper vacuole morphology. Plays an important role in osmotically-induced vacuole fragmentation. Required for cytoplasm to vacuole transport (Cvt) vesicle formation, pexophagy and starvation-induced autophagy. Involved in correct ATG9 trafficking to the pre-autophagosomal structure. Might also be involved in premeiotic DNA replication. In Chaetomium globosum (strain ATCC 6205 / CBS 148.51 / DSM 1962 / NBRC 6347 / NRRL 1970) (Soil fungus), this protein is Autophagy-related protein 18 (ATG18).